Reading from the N-terminus, the 105-residue chain is Nitrogen fixation nifHD region glnB-like protein 1 (105 aa).

This sequence belongs to the P(II) protein family.

In terms of biological role, could be involved in the regulation of nitrogen fixation. The polypeptide is Nitrogen fixation nifHD region glnB-like protein 1 (glnBI) (Methanococcus maripaludis (strain DSM 14266 / JCM 13030 / NBRC 101832 / S2 / LL)).